The chain runs to 67 residues: Toxin Cex8 (67 aa).

Alanine 1 is a signal peptide. Positions 2–65 (KEGYLVNIYT…SYPYPEKSCG (64 aa)) constitute an LCN-type CS-alpha/beta domain. Cystine bridges form between cysteine 13–cysteine 64, cysteine 17–cysteine 40, cysteine 26–cysteine 45, and cysteine 30–cysteine 47. Cysteine 64 bears the Cysteine amide mark. Positions 65–67 (GRK) are excised as a propeptide.

Belongs to the long (4 C-C) scorpion toxin superfamily. Sodium channel inhibitor family. Beta subfamily. As to expression, expressed by the venom gland.

The protein localises to the secreted. Functionally, beta toxins bind voltage-independently at site-4 of sodium channels (Nav) and shift the voltage of activation toward more negative potentials thereby affecting sodium channel activation and promoting spontaneous and repetitive firing. This is Toxin Cex8 from Centruroides exilicauda (Bark scorpion).